Reading from the N-terminus, the 313-residue chain is Homeobox protein CDX-2 (313 aa).

At serine 60 the chain carries Phosphoserine. A disordered region spans residues 113–153; the sequence is HAHHHPHHHPHHPAAAPSCASGLLQTLNPGPPGPAATGAAE. Over residues 114–124 the composition is skewed to basic residues; sequence AHHHPHHHPHH. The tract at residues 185–215 is interaction with DNA; it reads KDKYRVVYTDHQRLELEKEFHYSRYITIRRK. Positions 185–244 form a DNA-binding region, homeobox; it reads KDKYRVVYTDHQRLELEKEFHYSRYITIRRKAELAATLGLSERQVKIWFQNRRAKERKIN. The interaction with 5-mCpG DNA stretch occupies residues 227–241; it reads RQVKIWFQNRRAKER. Residues 242–313 form a disordered region; sequence KINKKKLQQQ…GGVLNPTVTQ (72 aa). Low complexity-rich tracts occupy residues 249 to 261 and 271 to 300; these read QQQQQQQQQQQLA and QPGSLRSVPEPLSPVSSLQGSVPGSVPGVL. Serine 283 carries the post-translational modification Phosphoserine. The short motif at 283 to 295 is the 4S motif; modulates transactivation activity and protein stability element; sequence SPVSSLQGSVPGS.

The protein belongs to the Caudal homeobox family. Can bind DNA as a monomer or homodimer. Post-translationally, ubiquitinated, leading to its degradation by the proteasome. Phosphorylation at Ser-60 reduces transactivation capacity. Phosphorylation at Ser-283 reduces transactivation capacity and also increases ubiquitin-dependent proteasome degradation. In terms of tissue distribution, expressed in the intestine.

It is found in the nucleus. Transcription factor which regulates the transcription of multiple genes expressed in the intestinal epithelium. Binds to the promoter of the intestinal sucrase-isomaltase SI and activates SI transcription. Binds to the DNA sequence 5'-ATAAAAACTTAT-3' in the promoter region of VDR and activates VDR transcription. Binds to and activates transcription of LPH. Activates transcription of CLDN2 and intestinal mucin MUC2. Binds to the 5'-AATTTTTTACAACACCT-3' DNA sequence in the promoter region of CA1 and activates CA1 transcription. Important in broad range of functions from early differentiation to maintenance of the intestinal epithelial lining of both the small and large intestine. Binds preferentially to methylated DNA. In Mesocricetus auratus (Golden hamster), this protein is Homeobox protein CDX-2 (CDX2).